A 503-amino-acid polypeptide reads, in one-letter code: Maturase K (503 aa).

This sequence belongs to the intron maturase 2 family. MatK subfamily.

It is found in the plastid. Its subcellular location is the chloroplast. Its function is as follows. Usually encoded in the trnK tRNA gene intron. Probably assists in splicing its own and other chloroplast group II introns. The chain is Maturase K from Panax quinquefolius (American ginseng).